Consider the following 129-residue polypeptide: SOSS complex subunit C homolog (129 aa).

A disordered region spans residues 105-129; sequence RLEPLPSPATTPTTPNAPPSHNISK.

This sequence belongs to the SOSS-C family.

This Drosophila erecta (Fruit fly) protein is SOSS complex subunit C homolog.